The chain runs to 324 residues: tRNA pseudouridine synthase B (324 aa).

The active-site Nucleophile is the D49. Residues 87 to 107 (RSTDDLEGQPTKTSDKRPSRE) are disordered.

The protein belongs to the pseudouridine synthase TruB family. Type 1 subfamily.

It carries out the reaction uridine(55) in tRNA = pseudouridine(55) in tRNA. Functionally, responsible for synthesis of pseudouridine from uracil-55 in the psi GC loop of transfer RNAs. The chain is tRNA pseudouridine synthase B from Brucella melitensis biotype 1 (strain ATCC 23456 / CCUG 17765 / NCTC 10094 / 16M).